Here is a 709-residue protein sequence, read N- to C-terminus: Polyribonucleotide nucleotidyltransferase (709 aa).

Mg(2+)-binding residues include aspartate 489 and aspartate 495. One can recognise a KH domain in the interval 556–615; sequence PKIDMIKIDVDKIKVVIGKGGETIDKIIAETGVKIDIDEEGNVSIFSSDQAAIDRTKDII. An S1 motif domain is found at 625–693; it reads GEVYHAKVVR…DKGRVDASMK (69 aa).

Belongs to the polyribonucleotide nucleotidyltransferase family. It depends on Mg(2+) as a cofactor.

The protein localises to the cytoplasm. It catalyses the reaction RNA(n+1) + phosphate = RNA(n) + a ribonucleoside 5'-diphosphate. Involved in mRNA degradation. Catalyzes the phosphorolysis of single-stranded polyribonucleotides processively in the 3'- to 5'-direction. In Streptococcus agalactiae serotype Ia (strain ATCC 27591 / A909 / CDC SS700), this protein is Polyribonucleotide nucleotidyltransferase.